The sequence spans 191 residues: uncharacterized protein (191 aa).

This is an uncharacterized protein from Schizosaccharomyces pombe (strain 972 / ATCC 24843) (Fission yeast).